We begin with the raw amino-acid sequence, 238 residues long: Ribonuclease M (238 aa).

5 cysteine pairs are disulfide-bonded: cysteine 5/cysteine 22, cysteine 13/cysteine 58, cysteine 21/cysteine 126, cysteine 66/cysteine 118, and cysteine 191/cysteine 225. Histidine 51 is a catalytic residue. The N-linked (GlcNAc...) asparagine glycan is linked to asparagine 74. Catalysis depends on residues glutamate 111 and histidine 115.

Belongs to the RNase T2 family.

It carries out the reaction a ribonucleotidyl-ribonucleotide-RNA + H2O = a 3'-end 3'-phospho-ribonucleotide-RNA + a 5'-end dephospho-ribonucleoside-RNA + H(+). Its function is as follows. This is a base non-specific and adenylic acid preferential ribonuclease. The protein is Ribonuclease M of Aspergillus phoenicis (Aspergillus saitoi).